The sequence spans 256 residues: Type III pantothenate kinase (256 aa).

Aspartate 6–valine 13 serves as a coordination point for ATP. Substrate-binding positions include tyrosine 100 and glycine 107–arginine 110. The Proton acceptor role is filled by aspartate 109. Aspartate 129 serves as a coordination point for K(+). Threonine 132 contacts ATP. Threonine 184 contacts substrate.

The protein belongs to the type III pantothenate kinase family. As to quaternary structure, homodimer. NH4(+) is required as a cofactor. The cofactor is K(+).

It localises to the cytoplasm. The enzyme catalyses (R)-pantothenate + ATP = (R)-4'-phosphopantothenate + ADP + H(+). It participates in cofactor biosynthesis; coenzyme A biosynthesis; CoA from (R)-pantothenate: step 1/5. Its function is as follows. Catalyzes the phosphorylation of pantothenate (Pan), the first step in CoA biosynthesis. This chain is Type III pantothenate kinase, found in Geotalea daltonii (strain DSM 22248 / JCM 15807 / FRC-32) (Geobacter daltonii).